The chain runs to 640 residues: Tyrosine--tRNA ligase, mitochondrial (640 aa).

Tyr100 serves as a coordination point for L-tyrosine. An ATP-binding site is contributed by Asp104. The short motif at 105 to 114 is the 'HIGH' region element; that stretch reads PTAPSLHIGH. L-tyrosine is bound by residues Asp144, Tyr248, Gln252, Asp255, and Gln274. Positions 322 to 326 match the 'KMSKS' region motif; the sequence is KFGKS. Lys325 lines the ATP pocket.

This sequence belongs to the class-I aminoacyl-tRNA synthetase family.

It localises to the mitochondrion matrix. It catalyses the reaction tRNA(Tyr) + L-tyrosine + ATP = L-tyrosyl-tRNA(Tyr) + AMP + diphosphate + H(+). Functionally, has both an aminoacyl-tRNA synthetase activity and is involved in the splicing of group I introns. The chain is Tyrosine--tRNA ligase, mitochondrial (YTS1) from Podospora anserina (Pleurage anserina).